The following is a 1372-amino-acid chain: Disease resistance protein RRS1B (1372 aa).

Residues Thr2–Leu137 enclose the TIR domain. The region spanning Val166–Ile417 is the NB-ARC domain. Gly170–Thr177 contributes to the ATP binding site. An LRR 1 repeat occupies Pro491–Asn515. The LRR 2; degenerate repeat unit spans residues Asn528–Ser544. 10 LRR repeats span residues Leu545–Pro568, His570–Leu591, Ala614–Leu637, Leu638–Pro658, Pro659–Pro681, Ile693–Thr718, Pro723–Glu747, Leu749–Pro767, Arg768–Phe792, and Cys798–Leu823. Positions Ile950 to Asp964 match the Nuclear localization signal motif. Positions Asp1174 to Pro1240 form a DNA-binding region, WRKY. Disordered stretches follow at residues Leu1246–Pro1288 and Gln1337–Arg1372. Over residues Ser1249–Ser1269 the composition is skewed to low complexity. The span at Gln1270–His1279 shows a compositional bias: basic and acidic residues. The span at Gln1337–Gly1348 shows a compositional bias: polar residues.

It belongs to the disease resistance TIR-NB-LRR family. Interacts with RPS4B. RPS4B-RRS1B heterodimer interacts with the bacterial effectors AvrRps4 and PopP2.

The protein resides in the nucleus. Transcription factor. Interacts specifically with the W box (5'-(T)TGAC[CT]-3'), a frequently occurring elicitor-responsive cis-acting element. Also acts as a disease resistance protein that specifically recognizes the AvrRps4 type III effector avirulence protein from P.syringae. Heterodimerization with RPS4B is required to form a functional complex to recognize AvrRps4 and to mediate the hypersensitive response. The chain is Disease resistance protein RRS1B from Arabidopsis thaliana (Mouse-ear cress).